Consider the following 440-residue polypeptide: Polyprenol-phosphate-mannose-dependent alpha-(1-2)-phosphatidylinositol mannoside mannosyltransferase (440 aa).

11 helical membrane passes run 15–35, 87–107, 109–129, 144–161, 164–184, 193–213, 224–244, 281–301, 316–336, 360–380, and 395–415; these read LAPTIAWRVFQLLTLAGVLWV, LAAIAFAPFAWLSLPLASSAI, ATTLVLLIVATTIVLTRLDVW, AWLAAAMVAPAVIYLEPI, NFEFGQINVVLMTLVIADCVP, LLLGLAIALKLTPAVFLLYFL, TAATAVVASLAGFALAWSDSV, PRFILWVLACFAVLALTVWAA, APVLALVCVALFGLVVSPVSW, VWFTALTAAGLALTVWTPITL, and LAGGSYVWWAFAVIVVIGLVS. The segment at 419 to 440 is disordered; it reads THTGDAHETDEPLVPLARGEAG.

This sequence belongs to the glycosyltransferase 87 family.

The protein localises to the cell membrane. It participates in phospholipid metabolism; phosphatidylinositol metabolism. Functionally, responsible for the addition of alpha-(1-2) mannose branches to the linear mannan core on the biosynthetic pathway to mature Lipoarabinomannan (LAM). The protein is Polyprenol-phosphate-mannose-dependent alpha-(1-2)-phosphatidylinositol mannoside mannosyltransferase of Mycolicibacterium smegmatis (strain ATCC 700084 / mc(2)155) (Mycobacterium smegmatis).